A 243-amino-acid polypeptide reads, in one-letter code: Tetraspanin-36 (243 aa).

At 1–9 (MDCGIITSK) the chain is on the cytoplasmic side. The helical transmembrane segment at 10-30 (TILLLLSLIFWAAGAALAYVG) threads the bilayer. Residues 31 to 49 (SYVIKSYNNFEDFMSDRHT) lie on the Lumenal side of the membrane. The helical transmembrane segment at 50 to 70 (LIPAAIIIGVAVVMFIIGFVG) threads the bilayer. Residues 71–84 (CCATLRESKVGLGL) are Cytoplasmic-facing. Residues 85 to 105 (FLIIIMLIFAAEVTAFVFGII) traverse the membrane as a helical segment. Residues 106 to 208 (YRGRIRGDLE…QVLQDVLSYA (103 aa)) are Lumenal-facing. N-linked (GlcNAc...) asparagine glycosylation is found at Asn149, Asn163, and Asn174. Residues 209-229 (MLVILGFAIIKFFGMLSVCVI) traverse the membrane as a helical segment. The Cytoplasmic portion of the chain corresponds to 230–243 (TCKSKKNEYQPLYA).

This sequence belongs to the tetraspanin (TM4SF) family. In terms of processing, N-glycosylated. As to expression, strongly expressed in melanophores and xanthophores. Also detected in eye, brain, heart, skin, fin, testis and ovary.

The protein localises to the golgi apparatus membrane. It localises to the endoplasmic reticulum membrane. Functionally, plays a role in migration and segregation of pigment cells (melanophores and xanthophores). Contributes to pigment stripe patterning in the epidermis. The polypeptide is Tetraspanin-36 (Danio rerio (Zebrafish)).